A 139-amino-acid polypeptide reads, in one-letter code: Putative pre-16S rRNA nuclease (139 aa).

It belongs to the YqgF nuclease family.

Its subcellular location is the cytoplasm. Functionally, could be a nuclease involved in processing of the 5'-end of pre-16S rRNA. This Streptococcus uberis (strain ATCC BAA-854 / 0140J) protein is Putative pre-16S rRNA nuclease.